The sequence spans 312 residues: Ubiquinone biosynthesis protein COQ9, mitochondrial (312 aa).

Residues 1 to 45 (MAATAAVSGVLRRLGWRLLQLRCLPVARCQSPLMPRAFHTAVGFR) constitute a mitochondrion transit peptide. An SIFI-degron motif is present at residues 17–32 (RLLQLRCLPVARCQSP). The segment at 43–92 (GFRSSEEQRQQPPHSSQQHSETQGPEFSRPPPRYTDQSGEEEEDYESEEQ) is disordered. Residues 52 to 63 (QQPPHSSQQHSE) show a composition bias toward low complexity. Phosphoserine is present on Ser-80. Acidic residues predominate over residues 80–91 (SGEEEEDYESEE). The residue at position 169 (Lys-169) is an N6-acetyllysine. Arg-238 is a binding site for a 1,2-diacylglycero-3-phosphoethanolamine.

It belongs to the COQ9 family. As to quaternary structure, homodimer. Heterodimer; two heterodimers of COQ7:COQ9 come together on the same side of the lipid pseudo-bilayer and form a curved tetramer with a hydrophobic surface suitable for membrane interaction. These two tetramers assemble into a soluble octamer with a pseudo-bilayer of lipids captured within. Interacts with COQ7; this interaction allows ubiquinone (CoQ) isoprene intermediates presentation to COQ7 and facilitates the COQ7-mediated hydroxylase step. In response to mitochondrial stress, the precursor protein is ubiquitinated by the SIFI complex in the cytoplasm before mitochondrial import, leading to its degradation. Within the SIFI complex, UBR4 initiates ubiquitin chain that are further elongated or branched by KCMF1.

It is found in the mitochondrion. Its pathway is cofactor biosynthesis; ubiquinone biosynthesis. Functionally, membrane-associated protein that warps the membrane surface to access and bind aromatic isoprenes with high specificity, including ubiquinone (CoQ) isoprene intermediates and presents them directly to COQ7, therefore facilitating the COQ7-mediated hydroxylase step. Participates in the biosynthesis of coenzyme Q, also named ubiquinone, an essential lipid-soluble electron transporter for aerobic cellular respiration. The polypeptide is Ubiquinone biosynthesis protein COQ9, mitochondrial (Rattus norvegicus (Rat)).